A 118-amino-acid chain; its full sequence is Ribonuclease P protein component (118 aa).

This sequence belongs to the RnpA family. In terms of assembly, consists of a catalytic RNA component (M1 or rnpB) and a protein subunit.

The enzyme catalyses Endonucleolytic cleavage of RNA, removing 5'-extranucleotides from tRNA precursor.. RNaseP catalyzes the removal of the 5'-leader sequence from pre-tRNA to produce the mature 5'-terminus. It can also cleave other RNA substrates such as 4.5S RNA. The protein component plays an auxiliary but essential role in vivo by binding to the 5'-leader sequence and broadening the substrate specificity of the ribozyme. The protein is Ribonuclease P protein component of Rickettsia peacockii (strain Rustic).